Here is a 394-residue protein sequence, read N- to C-terminus: Phosphoglycerate kinase (394 aa).

Substrate is bound by residues 21–23 (DFN), arginine 37, 60–63 (HLGR), arginine 119, and arginine 152. Residues lysine 202, glutamate 324, and 350 to 353 (GGDS) contribute to the ATP site.

It belongs to the phosphoglycerate kinase family. As to quaternary structure, monomer.

It localises to the cytoplasm. It catalyses the reaction (2R)-3-phosphoglycerate + ATP = (2R)-3-phospho-glyceroyl phosphate + ADP. It functions in the pathway carbohydrate degradation; glycolysis; pyruvate from D-glyceraldehyde 3-phosphate: step 2/5. The protein is Phosphoglycerate kinase of Herpetosiphon aurantiacus (strain ATCC 23779 / DSM 785 / 114-95).